The primary structure comprises 285 residues: NADPH-dependent 7-cyano-7-deazaguanine reductase (285 aa).

80–82 (VES) provides a ligand contact to substrate. NADPH is bound at residue 82–83 (SK). Cysteine 191 acts as the Thioimide intermediate in catalysis. Catalysis depends on aspartate 198, which acts as the Proton donor. Position 231 to 232 (231 to 232 (HE)) interacts with substrate. 260–261 (RG) is a binding site for NADPH.

The protein belongs to the GTP cyclohydrolase I family. QueF type 2 subfamily. Homodimer.

The protein resides in the cytoplasm. The catalysed reaction is 7-aminomethyl-7-carbaguanine + 2 NADP(+) = 7-cyano-7-deazaguanine + 2 NADPH + 3 H(+). It participates in tRNA modification; tRNA-queuosine biosynthesis. Catalyzes the NADPH-dependent reduction of 7-cyano-7-deazaguanine (preQ0) to 7-aminomethyl-7-deazaguanine (preQ1). This chain is NADPH-dependent 7-cyano-7-deazaguanine reductase, found in Psychrobacter arcticus (strain DSM 17307 / VKM B-2377 / 273-4).